Reading from the N-terminus, the 156-residue chain is Small ribosomal subunit protein uS7 (156 aa).

Belongs to the universal ribosomal protein uS7 family. Part of the 30S ribosomal subunit. Contacts proteins S9 and S11.

Its function is as follows. One of the primary rRNA binding proteins, it binds directly to 16S rRNA where it nucleates assembly of the head domain of the 30S subunit. Is located at the subunit interface close to the decoding center, probably blocks exit of the E-site tRNA. This chain is Small ribosomal subunit protein uS7, found in Dictyoglomus turgidum (strain DSM 6724 / Z-1310).